Reading from the N-terminus, the 245-residue chain is 1-(5-phosphoribosyl)-5-[(5-phosphoribosylamino)methylideneamino] imidazole-4-carboxamide isomerase (245 aa).

The Proton acceptor role is filled by aspartate 7. The active-site Proton donor is aspartate 129.

It belongs to the HisA/HisF family.

Its subcellular location is the cytoplasm. It catalyses the reaction 1-(5-phospho-beta-D-ribosyl)-5-[(5-phospho-beta-D-ribosylamino)methylideneamino]imidazole-4-carboxamide = 5-[(5-phospho-1-deoxy-D-ribulos-1-ylimino)methylamino]-1-(5-phospho-beta-D-ribosyl)imidazole-4-carboxamide. The protein operates within amino-acid biosynthesis; L-histidine biosynthesis; L-histidine from 5-phospho-alpha-D-ribose 1-diphosphate: step 4/9. This Shewanella baltica (strain OS155 / ATCC BAA-1091) protein is 1-(5-phosphoribosyl)-5-[(5-phosphoribosylamino)methylideneamino] imidazole-4-carboxamide isomerase.